A 150-amino-acid polypeptide reads, in one-letter code: Thyroid hormone-inducible hepatic protein (150 aa).

Residues 83–105 are disordered; sequence KVAGNEGSEAENEAAETEEAEED. Residue serine 90 is modified to Phosphoserine. The segment covering 90-105 has biased composition (acidic residues); sequence SEAENEAAETEEAEED.

It belongs to the SPOT14 family. Homodimer. Heterodimer with MID1IP1. Interacts with THRB and PLAGL1. As to expression, highly expressed in liver, lactating mammary gland, epididymal, retroperitoneal and brown fat. Mainly expressed in tissues that synthesize triglycerides.

It is found in the nucleus. It localises to the cytoplasm. Its function is as follows. Plays a role in the regulation of lipogenesis, especially in lactating mammary gland. Important for the biosynthesis of triglycerides with medium-length fatty acid chains. May modulate lipogenesis by interacting with MID1IP1 and preventing its interaction with ACACA. May function as transcriptional coactivator. May modulate the transcription factor activity of THRB. The sequence is that of Thyroid hormone-inducible hepatic protein (Thrsp) from Rattus norvegicus (Rat).